Reading from the N-terminus, the 511-residue chain is Histidine ammonia-lyase (511 aa).

The 5-imidazolinone (Ala-Gly) cross-link spans 143–145; it reads ASG. Serine 144 carries the 2,3-didehydroalanine (Ser) modification.

It belongs to the PAL/histidase family. Contains an active site 4-methylidene-imidazol-5-one (MIO), which is formed autocatalytically by cyclization and dehydration of residues Ala-Ser-Gly.

It localises to the cytoplasm. It catalyses the reaction L-histidine = trans-urocanate + NH4(+). It participates in amino-acid degradation; L-histidine degradation into L-glutamate; N-formimidoyl-L-glutamate from L-histidine: step 1/3. The polypeptide is Histidine ammonia-lyase (Idiomarina loihiensis (strain ATCC BAA-735 / DSM 15497 / L2-TR)).